Consider the following 331-residue polypeptide: Ribosomal RNA small subunit methyltransferase C (331 aa).

It belongs to the methyltransferase superfamily. RsmC family. Monomer.

The protein localises to the cytoplasm. The enzyme catalyses guanosine(1207) in 16S rRNA + S-adenosyl-L-methionine = N(2)-methylguanosine(1207) in 16S rRNA + S-adenosyl-L-homocysteine + H(+). In terms of biological role, specifically methylates the guanine in position 1207 of 16S rRNA in the 30S particle. This is Ribosomal RNA small subunit methyltransferase C from Ectopseudomonas mendocina (strain ymp) (Pseudomonas mendocina).